The sequence spans 316 residues: Adenine deaminase (316 aa).

Zn(2+) is bound by residues H14, H16, and H194. E197 functions as the Proton donor in the catalytic mechanism. D275 provides a ligand contact to Zn(2+). D276 provides a ligand contact to substrate.

This sequence belongs to the metallo-dependent hydrolases superfamily. Adenosine and AMP deaminases family. Adenine deaminase type 2 subfamily. The cofactor is Zn(2+).

It carries out the reaction adenine + H2O + H(+) = hypoxanthine + NH4(+). In terms of biological role, catalyzes the hydrolytic deamination of adenine to hypoxanthine. Plays an important role in the purine salvage pathway and in nitrogen catabolism. The polypeptide is Adenine deaminase (Bordetella avium (strain 197N)).